Consider the following 149-residue polypeptide: UPF0208 membrane protein PBPRA2797 (149 aa).

Helical transmembrane passes span 41-60 (FATRVMPAVAVMSVLSQMAF) and 65-87 (ALPQAMTVALFALTMPLQGLWWL).

Belongs to the UPF0208 family.

The protein resides in the cell inner membrane. This is UPF0208 membrane protein PBPRA2797 from Photobacterium profundum (strain SS9).